The primary structure comprises 291 residues: METGRIIKLISGVYQVDVDGTLYDTKPRGLFRKKKFSPIVGDIVDFEIQNTSEGYIHHVHERHNELKRPPVSNIDGLIIVMSAVEPDFSTQLLDRFLVIAHSYDLEPSILVTKKDLASENEIEQINAWLKIYEEIGYNTQFVGKHTSQQEVVATWPKGLIVLSGQSGVGKSTFINAFKPELNLETNHISKSLNRGKHTTRHVELFERESGFIADTPGFSALDFGHIDKDELKHYFIEMNRFGEECKFRNCNHIKEPKCHVKQQLENGYLAQFRYDHYIQLYNEISNRKVRY.

Positions 63 to 221 constitute a CP-type G domain; sequence HNELKRPPVS…IADTPGFSAL (159 aa). Residues 112-115 and 164-172 each bind GTP; these read TKKD and GQSGVGKST. Zn(2+)-binding residues include C245, C250, H252, and C258.

It belongs to the TRAFAC class YlqF/YawG GTPase family. RsgA subfamily. As to quaternary structure, monomer. Associates with 30S ribosomal subunit, binds 16S rRNA. Requires Zn(2+) as cofactor.

The protein resides in the cytoplasm. Functionally, one of several proteins that assist in the late maturation steps of the functional core of the 30S ribosomal subunit. Helps release RbfA from mature subunits. May play a role in the assembly of ribosomal proteins into the subunit. Circularly permuted GTPase that catalyzes slow GTP hydrolysis, GTPase activity is stimulated by the 30S ribosomal subunit. The sequence is that of Small ribosomal subunit biogenesis GTPase RsgA from Staphylococcus haemolyticus (strain JCSC1435).